The following is a 48-amino-acid chain: Large ribosomal subunit protein bL33 (48 aa).

The protein belongs to the bacterial ribosomal protein bL33 family.

The chain is Large ribosomal subunit protein bL33 from Streptococcus mutans serotype c (strain ATCC 700610 / UA159).